The primary structure comprises 223 residues: MOB-like protein phocein (223 aa).

Positions 92, 97, 110, 113, 119, 127, 169, and 174 each coordinate Zn(2+).

Belongs to the MOB1/phocein family. Part of the core of STRIPAK complexes composed of PP2A catalytic and scaffolding subunits, the striatins (PP2A regulatory subunits), the striatin-associated proteins MOB4, STRIP1 and STRIP2, PDCD10 and members of the STE20 kinases, such as STK24 and STK26.

It localises to the cytoplasm. Its subcellular location is the membrane. It is found in the golgi apparatus. The protein localises to the golgi stack membrane. Functionally, part of the striatin-interacting phosphatase and kinase (STRIPAK) complexes. STRIPAK complexes have critical roles in protein (de)phosphorylation and are regulators of multiple signaling pathways including Hippo, MAPK, nuclear receptor and cytoskeleton remodeling. Different types of STRIPAK complexes are involved in a variety of biological processes such as cell growth, differentiation, apoptosis, metabolism and immune regulation. The sequence is that of MOB-like protein phocein (MOB4) from Gallus gallus (Chicken).